Consider the following 139-residue polypeptide: Plastocyanin (139 aa).

The first 34 residues, 1 to 34, serve as a signal peptide directing secretion; the sequence is MKLIAASLRRLSLAVLTVLLVVSSFAVFTPSAAA. Residues 35-135 enclose the Plastocyanin-like domain; that stretch reads ETYTVKLGSD…HRGAGMVGKI (101 aa). Histidine 73, cysteine 123, histidine 126, and methionine 131 together coordinate Cu cation.

This sequence belongs to the plastocyanin family. It depends on Cu(2+) as a cofactor.

Its subcellular location is the cellular thylakoid membrane. Participates in electron transfer between P700 and the cytochrome b6-f complex in photosystem I. The polypeptide is Plastocyanin (petE) (Trichormus variabilis (strain ATCC 29413 / PCC 7937) (Anabaena variabilis)).